A 588-amino-acid polypeptide reads, in one-letter code: Cyclin-dependent kinase 8 (588 aa).

The Protein kinase domain occupies 26-348 (FENSKEIGRG…CEEAMNDIYF (323 aa)). Residues 32-40 (IGRGTYGLV) and K60 contribute to the ATP site. The active-site Proton acceptor is the D158. Disordered stretches follow at residues 376 to 426 (MTVA…GAHP), 510 to 529 (PGPS…AVPG), and 546 to 588 (MRAP…QYHR). Residues 382 to 426 (QAQQQHQQQQVQMQQQPQMGQQQMMGQPQMVQPQMGQPPMGGAHP) show a composition bias toward low complexity. The segment covering 557–588 (MPGRGMAPPQMGQQQPGPNQQQQQQWQQQYHR) has biased composition (low complexity).

The protein belongs to the protein kinase superfamily. CMGC Ser/Thr protein kinase family. CDC2/CDKX subfamily. Component of the Mediator complex. Requires Mg(2+) as cofactor.

It is found in the nucleus. The catalysed reaction is L-seryl-[protein] + ATP = O-phospho-L-seryl-[protein] + ADP + H(+). The enzyme catalyses L-threonyl-[protein] + ATP = O-phospho-L-threonyl-[protein] + ADP + H(+). It catalyses the reaction [DNA-directed RNA polymerase] + ATP = phospho-[DNA-directed RNA polymerase] + ADP + H(+). Component of the Mediator complex, a coactivator involved in regulated gene transcription of nearly all RNA polymerase II-dependent genes. Mediator functions as a bridge to convey information from gene-specific regulatory proteins to the basal RNA polymerase II transcription machinery. Mediator is recruited to promoters by direct interactions with regulatory proteins and serves as a scaffold for the assembly of a functional pre-initiation complex with RNA polymerase II and the general transcription factors. Phosphorylates the CTD (C-terminal domain) of the large subunit of RNA polymerase II (RNAp II), which may inhibit the formation of a transcription initiation complex. The protein is Cyclin-dependent kinase 8 (cdk-8) of Caenorhabditis elegans.